The sequence spans 253 residues: Phosphate import ATP-binding protein PstB (253 aa).

An ABC transporter domain is found at 7–248 (MHSKGLDFFY…PGNKQTEDYI (242 aa)). 39–46 (GPSGCGKS) contributes to the ATP binding site.

This sequence belongs to the ABC transporter superfamily. Phosphate importer (TC 3.A.1.7) family. The complex is composed of two ATP-binding proteins (PstB), two transmembrane proteins (PstC and PstA) and a solute-binding protein (PstS).

It localises to the cell inner membrane. It carries out the reaction phosphate(out) + ATP + H2O = ADP + 2 phosphate(in) + H(+). Functionally, part of the ABC transporter complex PstSACB involved in phosphate import. Responsible for energy coupling to the transport system. In Oleidesulfovibrio alaskensis (strain ATCC BAA-1058 / DSM 17464 / G20) (Desulfovibrio alaskensis), this protein is Phosphate import ATP-binding protein PstB.